The primary structure comprises 354 residues: Uroporphyrinogen decarboxylase (354 aa).

Substrate contacts are provided by residues 27 to 31 (RQAGR), Asp77, Tyr154, Thr209, and His327.

It belongs to the uroporphyrinogen decarboxylase family. Homodimer.

It localises to the cytoplasm. It carries out the reaction uroporphyrinogen III + 4 H(+) = coproporphyrinogen III + 4 CO2. The protein operates within porphyrin-containing compound metabolism; protoporphyrin-IX biosynthesis; coproporphyrinogen-III from 5-aminolevulinate: step 4/4. In terms of biological role, catalyzes the decarboxylation of four acetate groups of uroporphyrinogen-III to yield coproporphyrinogen-III. The sequence is that of Uroporphyrinogen decarboxylase from Hydrogenovibrio crunogenus (strain DSM 25203 / XCL-2) (Thiomicrospira crunogena).